Here is a 582-residue protein sequence, read N- to C-terminus: DNA mismatch repair protein MutL (582 aa).

This sequence belongs to the DNA mismatch repair MutL/HexB family.

Functionally, this protein is involved in the repair of mismatches in DNA. It is required for dam-dependent methyl-directed DNA mismatch repair. May act as a 'molecular matchmaker', a protein that promotes the formation of a stable complex between two or more DNA-binding proteins in an ATP-dependent manner without itself being part of a final effector complex. The protein is DNA mismatch repair protein MutL of Buchnera aphidicola subsp. Schizaphis graminum (strain Sg).